Here is a 68-residue protein sequence, read N- to C-terminus: Large ribosomal subunit protein uL29 (68 aa).

Belongs to the universal ribosomal protein uL29 family.

This Prochlorococcus marinus (strain SARG / CCMP1375 / SS120) protein is Large ribosomal subunit protein uL29.